Consider the following 257-residue polypeptide: Glutamate racemase (257 aa).

Residues 12–13 and 44–45 contribute to the substrate site; these read DS and YG. The Proton donor/acceptor role is filled by Cys-75. 76-77 is a substrate binding site; it reads NT. The active-site Proton donor/acceptor is the Cys-176. A substrate-binding site is contributed by 177-178; it reads TH.

This sequence belongs to the aspartate/glutamate racemases family.

The catalysed reaction is L-glutamate = D-glutamate. It functions in the pathway cell wall biogenesis; peptidoglycan biosynthesis. Functionally, provides the (R)-glutamate required for cell wall biosynthesis. In Thermus thermophilus (strain ATCC 27634 / DSM 579 / HB8), this protein is Glutamate racemase.